The primary structure comprises 797 residues: MAP/microtubule affinity-regulating kinase 3 (797 aa).

Residues 1–35 (MSTRTPLPTVNERDTENHISHGDGRQEVTSRTGRS) are disordered. Positions 11 to 28 (NERDTENHISHGDGRQEV) are enriched in basic and acidic residues. Ser42 is modified (phosphoserine). Residues 56 to 307 (YRLLKTIGKG…LEQIMKDRWI (252 aa)) form the Protein kinase domain. ATP is bound by residues 62–70 (IGKGNFAKV) and Lys85. Asp178 functions as the Proton acceptor in the catalytic mechanism. Thr211 carries the post-translational modification Phosphothreonine; by LKB1. The UBA domain occupies 326–365 (ISDQKRIDIMVGMGYSQEEIQESLSKMKYDEITATYLLLG). Phosphoserine occurs at positions 368, 374, 376, 380, 383, 400, 419, and 469. Disordered stretches follow at residues 372–504 (DASD…GMTR) and 585–701 (PDQR…KPRS). Positions 374–385 (SDSSSSSNLSLA) are enriched in low complexity. Residues 391 to 400 (SDLSNSTGQS) show a composition bias toward polar residues. Composition is skewed to polar residues over residues 492–504 (VPSS…GMTR) and 585–602 (PDQR…SATT). Phosphoserine occurs at positions 593 and 596. Thr602 is modified (phosphothreonine). Thr617 carries the phosphothreonine; by PKC/PRKCZ modification. Ser636, Ser651, and Ser654 each carry phosphoserine. Positions 637-664 (PSLSHEATPLSQTRSRGSTNLFSKLTSK) are enriched in polar residues. Basic and acidic residues predominate over residues 669-678 (LPTEYERNGR). Ser687 bears the Phosphoserine mark. Positions 689–699 (EQKDENREAKP) are enriched in basic and acidic residues. The region spanning 748–797 (DGHAESLVQWEMEVCKLPRLSLNGVRFKRISGTSIAFKNIASKIANELKL) is the KA1 domain.

This sequence belongs to the protein kinase superfamily. CAMK Ser/Thr protein kinase family. SNF1 subfamily. As to quaternary structure, interacts with MAPT/TAU. Interacts with DLG5 (via coiled-coil domain). Interacts with STK3/MST2 and STK4/MST1 in the presence of DLG5. Interacts with YWHAB, YWHAG, YWHAQ and YWHAZ. Interacts with PKP2 (via N-terminus). Interacts with CDC25C. Interacts with KSR1. In terms of processing, phosphorylated at Thr-211 by STK11/LKB1 in complex with STE20-related adapter-alpha (STRADA) pseudo kinase and CAB39. Phosphorylation at Thr-617 by PRKCZ/aPKC inhibits the kinase activity.

Its subcellular location is the cell membrane. It is found in the cell projection. It localises to the dendrite. The protein resides in the cytoplasm. It catalyses the reaction L-seryl-[protein] + ATP = O-phospho-L-seryl-[protein] + ADP + H(+). It carries out the reaction L-threonyl-[protein] + ATP = O-phospho-L-threonyl-[protein] + ADP + H(+). With respect to regulation, activated by phosphorylation on Thr-211. Inhibited by phosphorylation on Thr-617. Functionally, serine/threonine-protein kinase. Involved in the specific phosphorylation of microtubule-associated proteins for MAP2 and MAP4. Phosphorylates the microtubule-associated protein MAPT/TAU. Phosphorylates CDC25C on 'Ser-216'. Regulates localization and activity of some histone deacetylases by mediating phosphorylation of HDAC7, promoting subsequent interaction between HDAC7 and 14-3-3 and export from the nucleus. Regulates localization and activity of MITF by mediating its phosphorylation, promoting subsequent interaction between MITF and 14-3-3 and retention in the cytosol. Negatively regulates the Hippo signaling pathway and antagonizes the phosphorylation of LATS1. Cooperates with DLG5 to inhibit the kinase activity of STK3/MST2 toward LATS1. Phosphorylates PKP2 and KSR1. The chain is MAP/microtubule affinity-regulating kinase 3 (Mark3) from Rattus norvegicus (Rat).